A 74-amino-acid polypeptide reads, in one-letter code: Conotoxin VnMEKL-0222 (74 aa).

An N-terminal signal peptide occupies residues 1–19; it reads MEKLTILLLVAAVLMSTQA. The propeptide occupies 20–46; that stretch reads LIQEKRPKEKIKFLSKRKSIPESWWEG. 3 cysteine pairs are disulfide-bonded: cysteine 48–cysteine 62, cysteine 55–cysteine 66, and cysteine 61–cysteine 71.

This sequence belongs to the conotoxin O2 superfamily. As to expression, expressed by the venom duct.

The protein resides in the secreted. This Conus ventricosus (Mediterranean cone) protein is Conotoxin VnMEKL-0222.